A 466-amino-acid chain; its full sequence is ATP synthase subunit beta (466 aa).

148–155 (GGAGVGKT) lines the ATP pocket.

This sequence belongs to the ATPase alpha/beta chains family. In terms of assembly, F-type ATPases have 2 components, CF(1) - the catalytic core - and CF(0) - the membrane proton channel. CF(1) has five subunits: alpha(3), beta(3), gamma(1), delta(1), epsilon(1). CF(0) has three main subunits: a(1), b(2) and c(9-12). The alpha and beta chains form an alternating ring which encloses part of the gamma chain. CF(1) is attached to CF(0) by a central stalk formed by the gamma and epsilon chains, while a peripheral stalk is formed by the delta and b chains.

The protein localises to the cell inner membrane. The enzyme catalyses ATP + H2O + 4 H(+)(in) = ADP + phosphate + 5 H(+)(out). Functionally, produces ATP from ADP in the presence of a proton gradient across the membrane. The catalytic sites are hosted primarily by the beta subunits. This Xylella fastidiosa (strain M23) protein is ATP synthase subunit beta.